The primary structure comprises 929 residues: Synaptopodin (929 aa).

Position 1 is an N-acetylmethionine (methionine 1). A compositionally biased stretch (pro residues) spans methionine 1–alanine 12. Residues methionine 1 to lysine 260 are disordered. Basic and acidic residues-rich tracts occupy residues glycine 60 to alanine 69 and serine 91 to valine 110. Phosphoserine is present on serine 140. Over residues threonine 142–alanine 151 the composition is skewed to basic and acidic residues. Residues arginine 152–glycine 170 show a composition bias toward polar residues. Serine 207 is modified (phosphoserine). A compositionally biased stretch (pro residues) spans glutamate 224–glutamine 234. Serine 263 carries the post-translational modification Phosphoserine. Residues glycine 285–alanine 389 are disordered. A compositionally biased stretch (low complexity) spans leucine 317–serine 332. Asparagine 330 is a glycosylation site (N-linked (GlcNAc...) asparagine). Polar residues predominate over residues histidine 333–serine 379. A phosphoserine mark is found at serine 501 and serine 525. A disordered region spans residues phenylalanine 509 to asparagine 558. The residue at position 560 (threonine 560) is a Phosphothreonine. The short motif at proline 562 to tyrosine 565 is the PPxY motif element. Serine 580 is subject to Phosphoserine. A PPxY motif motif is present at residues proline 581–tyrosine 584. Disordered regions lie at residues proline 589 to isoleucine 610 and lysine 630 to glutamate 726. The span at alanine 646 to glycine 656 shows a compositional bias: basic and acidic residues. 3 positions are modified to phosphoserine: serine 685, serine 702, and tyrosine 738. Residues serine 685–serine 698 show a composition bias toward low complexity. Residues isoleucine 740 to tryptophan 763 form a disordered region. At threonine 746 the chain carries Phosphothreonine. Phosphoserine is present on residues serine 754, serine 758, and serine 779. Threonine 783 carries the phosphothreonine modification. 8 positions are modified to phosphoserine: proline 784, threonine 804, arginine 812, lysine 826, serine 833, serine 854, proline 871, and proline 894. A compositionally biased stretch (low complexity) spans lysine 826–serine 839. The interval lysine 826–glycine 916 is disordered. Positions glycine 866 to alanine 880 are enriched in polar residues.

It belongs to the synaptopodin family. As to quaternary structure, interacts with BAIAP1. Interacts with actin. Interacts (via PPxY motifs) with WWC1 (via WW domains). Post-translationally, O-glycosylated. In terms of tissue distribution, expressed in cerebral cortex.

It is found in the cytoplasm. The protein resides in the cytoskeleton. Its subcellular location is the cell junction. The protein localises to the tight junction. It localises to the perikaryon. It is found in the cell projection. The protein resides in the dendritic spine. Its subcellular location is the postsynaptic density. The protein localises to the synapse. It localises to the cytosol. Its function is as follows. Actin-associated protein that may play a role in modulating actin-based shape and motility of dendritic spines and renal podocyte foot processes. Seems to be essential for the formation of spine apparatuses in spines of telencephalic neurons, which is involved in synaptic plasticity. The polypeptide is Synaptopodin (SYNPO) (Homo sapiens (Human)).